A 147-amino-acid chain; its full sequence is Echinoidin (147 aa).

A C-type lectin domain is found at 1-143; that stretch reads GCCPTFWTSF…STRHYLICKL (143 aa). 3 disulfide bridges follow: cysteine 3–cysteine 14, cysteine 31–cysteine 141, and cysteine 116–cysteine 132. Serine 38 is a glycosylation site (O-linked (Hex) serine). Positions 39-41 match the Cell attachment site motif; that stretch reads RGD.

In terms of assembly, homodimer; disulfide-linked. The identity of the saccharide is not reported in PubMed:3571253, and it is unlikely to be N-acetylgalactosamine. The sugar attached to Ser-38 is represented simply as Hex. Coelemic fluid.

It localises to the secreted. Role in the defense system of the organism against microorganisms. This lectin is specific for Gal-GalNAc. The protein is Echinoidin of Heliocidaris crassispina (Sea urchin).